Here is a 352-residue protein sequence, read N- to C-terminus: Sphingosine 1-phosphate receptor 2 (352 aa).

Over 1 to 34 (MGGLYSEYLNPEKVQEHYNYTKETLDMQETPSRK) the chain is Extracellular. A glycan (N-linked (GlcNAc...) asparagine) is linked at Asn19. Residues 35–59 (VASAFIIILCCAIVVENLLVLIAVA) traverse the membrane as a helical segment. The Cytoplasmic segment spans residues 60–66 (RNSKFHS). A helical membrane pass occupies residues 67 to 95 (AMYLFLGNLAASDLLAGVAFVANTLLSGP). At 96–109 (VTLSLTPLQWFARE) the chain is on the extracellular side. The chain crosses the membrane as a helical span at residues 110 to 128 (GSAFITLSASVFSLLAIAI). Topologically, residues 129–147 (ERQVAIAKVKLYGSDKSCR) are cytoplasmic. The helical transmembrane segment at 148 to 173 (MLMLIGASWLISLILGGLPILGWNCL) threads the bilayer. Residues 174 to 189 (DHLEACSTVLPLYAKH) are Extracellular-facing. Residues 190 to 210 (YVLCVVTIFSVILLAIVALYV) form a helical membrane-spanning segment. Residues 211-233 (RIYFVVRSSHADVAGPQTLALLK) lie on the Cytoplasmic side of the membrane. Residues 234-255 (TVTIVLGVFIICWLPAFSILLL) traverse the membrane as a helical segment. Residues 256 to 271 (DSTCPVRACPVLYKAH) lie on the Extracellular side of the membrane. Residues 272-292 (YFFAFATLNSLLNPVIYTWRS) form a helical membrane-spanning segment. Residues 293 to 352 (RDLRREVLRPLLCWRQGKGATGRRGGNPGHRLLPLRSSSSLERGLHMPTSPTFLEGNTVV) lie on the Cytoplasmic side of the membrane. Cys305 is lipidated: S-palmitoyl cysteine.

The protein belongs to the G-protein coupled receptor 1 family. Expressed in all developing tissues with highest levels detected in primitive, transformed cells. Relative abundance: lung &gt; kidney = skin = gut &gt; spleen &gt; brain &gt; liver.

It localises to the cell membrane. Its function is as follows. Receptor for the lysosphingolipid sphingosine 1-phosphate (S1P). S1P is a bioactive lysophospholipid that elicits diverse physiological effects on most types of cells and tissues. Receptor for the chemokine-like protein FAM19A5. Mediates the inhibitory effect of FAM19A5 on vascular smooth muscle cell proliferation and migration. In lymphoid follicles, couples the binding of S1P to the activation of GNA13 and downstream inhibition of AKT activation leading to suppression of germinal center (GC) B cell growth and migration outside the GC niche. The sequence is that of Sphingosine 1-phosphate receptor 2 (S1pr2) from Rattus norvegicus (Rat).